Consider the following 224-residue polypeptide: Phosphoribosylformylglycinamidine synthase subunit PurQ (224 aa).

One can recognise a Glutamine amidotransferase type-1 domain in the interval threonine 2–arginine 224. Cysteine 85 serves as the catalytic Nucleophile. Residues histidine 202 and glutamate 204 contribute to the active site. A disordered region spans residues glutamate 204–arginine 224.

In terms of assembly, part of the FGAM synthase complex composed of 1 PurL, 1 PurQ and 2 PurS subunits.

Its subcellular location is the cytoplasm. It catalyses the reaction N(2)-formyl-N(1)-(5-phospho-beta-D-ribosyl)glycinamide + L-glutamine + ATP + H2O = 2-formamido-N(1)-(5-O-phospho-beta-D-ribosyl)acetamidine + L-glutamate + ADP + phosphate + H(+). The enzyme catalyses L-glutamine + H2O = L-glutamate + NH4(+). It functions in the pathway purine metabolism; IMP biosynthesis via de novo pathway; 5-amino-1-(5-phospho-D-ribosyl)imidazole from N(2)-formyl-N(1)-(5-phospho-D-ribosyl)glycinamide: step 1/2. In terms of biological role, part of the phosphoribosylformylglycinamidine synthase complex involved in the purines biosynthetic pathway. Catalyzes the ATP-dependent conversion of formylglycinamide ribonucleotide (FGAR) and glutamine to yield formylglycinamidine ribonucleotide (FGAM) and glutamate. The FGAM synthase complex is composed of three subunits. PurQ produces an ammonia molecule by converting glutamine to glutamate. PurL transfers the ammonia molecule to FGAR to form FGAM in an ATP-dependent manner. PurS interacts with PurQ and PurL and is thought to assist in the transfer of the ammonia molecule from PurQ to PurL. This chain is Phosphoribosylformylglycinamidine synthase subunit PurQ, found in Natronomonas pharaonis (strain ATCC 35678 / DSM 2160 / CIP 103997 / JCM 8858 / NBRC 14720 / NCIMB 2260 / Gabara) (Halobacterium pharaonis).